A 252-amino-acid chain; its full sequence is MNHFAKRIIPCLDVKDGRVVKGVNFVGLIDAGDPVEVAKRYNEEGADELAFLDITATHLGQETMVETIARVAKELFIPLTVGGGIRTLDDISRLLNVGCDKVSLNSAAIHNPNLIDEAANKFGSQCVVVAIDAKKFDATHHVFINGGRIDTGKDALAWAKEVQERGAGEILLTSMDKDGTKDGYDITLTNAISKALNIPVIASGGAGTMEHIKDAFLNGADACLAASIFHFRQIEIRALKRYLKENGIEVRL.

Active-site residues include D13 and D132.

Belongs to the HisA/HisF family. Heterodimer of HisH and HisF.

The protein localises to the cytoplasm. The catalysed reaction is 5-[(5-phospho-1-deoxy-D-ribulos-1-ylimino)methylamino]-1-(5-phospho-beta-D-ribosyl)imidazole-4-carboxamide + L-glutamine = D-erythro-1-(imidazol-4-yl)glycerol 3-phosphate + 5-amino-1-(5-phospho-beta-D-ribosyl)imidazole-4-carboxamide + L-glutamate + H(+). It participates in amino-acid biosynthesis; L-histidine biosynthesis; L-histidine from 5-phospho-alpha-D-ribose 1-diphosphate: step 5/9. Functionally, IGPS catalyzes the conversion of PRFAR and glutamine to IGP, AICAR and glutamate. The HisF subunit catalyzes the cyclization activity that produces IGP and AICAR from PRFAR using the ammonia provided by the HisH subunit. This chain is Imidazole glycerol phosphate synthase subunit HisF, found in Campylobacter curvus (strain 525.92).